The following is a 585-amino-acid chain: Aspartate--tRNA(Asp/Asn) ligase (585 aa).

L-aspartate is bound at residue E173. Residues 197–200 (QLFK) form an aspartate region. An L-aspartate-binding site is contributed by R219. Residues 219–221 (RDE) and Q228 each bind ATP. H447 serves as a coordination point for L-aspartate. E477 contacts ATP. Position 484 (R484) interacts with L-aspartate. 529–532 (GFDR) provides a ligand contact to ATP.

It belongs to the class-II aminoacyl-tRNA synthetase family. Type 1 subfamily. In terms of assembly, homodimer.

The protein localises to the cytoplasm. It catalyses the reaction tRNA(Asx) + L-aspartate + ATP = L-aspartyl-tRNA(Asx) + AMP + diphosphate. Aspartyl-tRNA synthetase with relaxed tRNA specificity since it is able to aspartylate not only its cognate tRNA(Asp) but also tRNA(Asn). Reaction proceeds in two steps: L-aspartate is first activated by ATP to form Asp-AMP and then transferred to the acceptor end of tRNA(Asp/Asn). The protein is Aspartate--tRNA(Asp/Asn) ligase of Campylobacter concisus (strain 13826).